The sequence spans 800 residues: Receptor-like protein 47 (800 aa).

The first 31 residues, 1–31 (MMHSSSVRRMITVKWSLCLIFCLTNSILVSA), serve as a signal peptide directing secretion. Over 32-759 (KHLCLPDQKD…QDEDKEEEDQ (728 aa)) the chain is Extracellular. Asn-66 and Asn-102 each carry an N-linked (GlcNAc...) asparagine glycan. LRR repeat units lie at residues 109 to 131 (QHLQKLVLGSNHLSGILPDSIGN), 133 to 156 (KRLKVLVLVNCNLFGKIPSSLGNL), 157 to 179 (SYLTHLDLSYNDFTSEGPDSMGN), 190 to 213 (LSSVTWIDLGDNQLKGMLPSNMSS), 214 to 238 (LSKLEAFDISGNSFSGTIPSSLFMI), 240 to 262 (SLILLHLGRNDFSGPFEIGNISS), 263 to 288 (PSNLQLLNIGRNNFNPDIVDLSIFSP), 294 to 311 (YLDVSGINLKISSTVSLP), 312 to 334 (SPIEYLGLLSCNISEFPKFLRNQ), 335 to 358 (TSLEYLDISANQIEGQVPEWLWSL), 360 to 383 (ELRYVNISHNSFNGFEGPADVIQG), 385 to 406 (RELLVLDISSNIFQDPFPLLPV), 407 to 430 (VSMNYLFSSNNRFSGEIPKTICEL), 431 to 453 (DNLRILVLSNNNFSGSIPRCFEN), 455 to 477 (HLYVLHLRNNNLSGIFPEEAISH), 479 to 500 (LQSFDVGHNLFSGELPKSLINC), 502 to 523 (DIEFLNVEDNRINDTFPSWLEL), 524 to 550 (LPNLQILVLRSNEFYGPIFSPGDSLSF), 551 to 574 (SRLRIFDISENRFTGVLPSDYFVG), 621 to 645 (FTIYKTIDVSGNRLEGDIPESIGLL), 646 to 669 (KEVIVLSMSNNAFTGHIPPSLSNL), 670 to 693 (SNLQSLDLSQNRLSGSIPGELGKL), and 695 to 718 (FLEWMNFSHNRLEGPIPETTQIQT). N-linked (GlcNAc...) asparagine glycosylation occurs at Asn-155. Residue Asn-210 is glycosylated (N-linked (GlcNAc...) asparagine). Residue Asn-259 is glycosylated (N-linked (GlcNAc...) asparagine). N-linked (GlcNAc...) asparagine glycosylation is found at Asn-323 and Asn-333. A glycan (N-linked (GlcNAc...) asparagine) is linked at Asn-365. N-linked (GlcNAc...) asparagine glycans are attached at residues Asn-442, Asn-465, Asn-499, and Asn-514. Asn-668 is a glycosylation site (N-linked (GlcNAc...) asparagine). N-linked (GlcNAc...) asparagine glycosylation occurs at Asn-700. Residues 760-780 (VFSWIAAAIGYVPGVVCGLTI) traverse the membrane as a helical segment. At 781–800 (GHILVSHKRDWFMRIVSFFT) the chain is on the cytoplasmic side.

The protein belongs to the RLP family.

It localises to the cell membrane. The protein is Receptor-like protein 47 of Arabidopsis thaliana (Mouse-ear cress).